The sequence spans 160 residues: SsrA-binding protein (160 aa).

It belongs to the SmpB family.

It is found in the cytoplasm. Required for rescue of stalled ribosomes mediated by trans-translation. Binds to transfer-messenger RNA (tmRNA), required for stable association of tmRNA with ribosomes. tmRNA and SmpB together mimic tRNA shape, replacing the anticodon stem-loop with SmpB. tmRNA is encoded by the ssrA gene; the 2 termini fold to resemble tRNA(Ala) and it encodes a 'tag peptide', a short internal open reading frame. During trans-translation Ala-aminoacylated tmRNA acts like a tRNA, entering the A-site of stalled ribosomes, displacing the stalled mRNA. The ribosome then switches to translate the ORF on the tmRNA; the nascent peptide is terminated with the 'tag peptide' encoded by the tmRNA and targeted for degradation. The ribosome is freed to recommence translation, which seems to be the essential function of trans-translation. The polypeptide is SsrA-binding protein (Pectobacterium carotovorum subsp. carotovorum (strain PC1)).